The sequence spans 345 residues: Phosphoribosylformylglycinamidine cyclo-ligase (345 aa).

It belongs to the AIR synthase family.

It is found in the cytoplasm. The catalysed reaction is 2-formamido-N(1)-(5-O-phospho-beta-D-ribosyl)acetamidine + ATP = 5-amino-1-(5-phospho-beta-D-ribosyl)imidazole + ADP + phosphate + H(+). Its pathway is purine metabolism; IMP biosynthesis via de novo pathway; 5-amino-1-(5-phospho-D-ribosyl)imidazole from N(2)-formyl-N(1)-(5-phospho-D-ribosyl)glycinamide: step 2/2. The chain is Phosphoribosylformylglycinamidine cyclo-ligase from Escherichia coli O7:K1 (strain IAI39 / ExPEC).